Reading from the N-terminus, the 154-residue chain is uncharacterized protein (154 aa).

Belongs to the MG032/MG096/MG288 family.

This is an uncharacterized protein from Mycoplasma pneumoniae (strain ATCC 29342 / M129 / Subtype 1) (Mycoplasmoides pneumoniae).